The sequence spans 298 residues: Beta-1,3-galactosyltransferase 5 (298 aa).

Over 1 to 7 the chain is Cytoplasmic; it reads MAFPKMR. The chain crosses the membrane as a helical; Signal-anchor for type II membrane protein span at residues 8–28; sequence LMYICLLVLGALCLYFSMYSL. Over 29 to 298 the chain is Lumenal; that stretch reads NPFKEQSFVY…PRTLLDYWQA (270 aa). N-linked (GlcNAc...) asparagine glycosylation is found at Asn-130, Asn-174, and Asn-231.

The protein belongs to the glycosyltransferase 31 family.

The protein localises to the golgi apparatus membrane. The catalysed reaction is a globoside Gb4Cer (d18:1(4E)) + UDP-alpha-D-galactose = a globoside GalGb4Cer (d18:1(4E)) + UDP + H(+). Its pathway is protein modification; protein glycosylation. Catalyzes the transfer of Gal to GlcNAc-based acceptors with a preference for the core3 O-linked glycan GlcNAc(beta1,3)GalNAc structure. Can use glycolipid LC3Cer as an efficient acceptor. This Gorilla gorilla gorilla (Western lowland gorilla) protein is Beta-1,3-galactosyltransferase 5 (B3GALT5).